A 593-amino-acid chain; its full sequence is Aspartate--tRNA ligase (593 aa).

An L-aspartate-binding site is contributed by E173. An aspartate region spans residues 197–200 (QLFK). R219 contributes to the L-aspartate binding site. Residues 219–221 (RDE) and Q228 contribute to the ATP site. H448 contributes to the L-aspartate binding site. An ATP-binding site is contributed by E482. R489 contributes to the L-aspartate binding site. Residue 534–537 (GLDR) coordinates ATP.

This sequence belongs to the class-II aminoacyl-tRNA synthetase family. Type 1 subfamily. Homodimer.

The protein localises to the cytoplasm. The enzyme catalyses tRNA(Asp) + L-aspartate + ATP = L-aspartyl-tRNA(Asp) + AMP + diphosphate. Its function is as follows. Catalyzes the attachment of L-aspartate to tRNA(Asp) in a two-step reaction: L-aspartate is first activated by ATP to form Asp-AMP and then transferred to the acceptor end of tRNA(Asp). This Shewanella denitrificans (strain OS217 / ATCC BAA-1090 / DSM 15013) protein is Aspartate--tRNA ligase.